The chain runs to 192 residues: NAD(P)H-quinone oxidoreductase subunit J, organellar chromatophore (192 aa).

The protein belongs to the complex I 30 kDa subunit family. As to quaternary structure, NDH is composed of at least 16 different subunits, 5 of which are encoded in the nucleus.

The protein resides in the plastid. The protein localises to the organellar chromatophore thylakoid membrane. It catalyses the reaction a quinone + NADH + H(+) = a quinol + NAD(+). Functionally, NDH-1 shuttles electrons from NADH, via FMN and iron-sulfur (Fe-S) centers, to quinones in the respiratory chain. Couples the redox reaction to proton translocation (for every two electrons transferred, four hydrogen ions are translocated across the cytoplasmic membrane), and thus conserves the redox energy in a proton gradient. The polypeptide is NAD(P)H-quinone oxidoreductase subunit J, organellar chromatophore (Paulinella chromatophora).